Here is a 258-residue protein sequence, read N- to C-terminus: Dihydroorotate dehydrogenase B (NAD(+)), electron transfer subunit (258 aa).

In terms of domain architecture, FAD-binding FR-type spans 2–100 (ILKENLTVVS…LGPQGNGFDL (99 aa)). FAD contacts are provided by residues 51–54 (RPIS), 68–70 (IYR), and 75–76 (GT). [2Fe-2S] cluster contacts are provided by cysteine 220, cysteine 225, cysteine 228, and cysteine 244.

It belongs to the PyrK family. In terms of assembly, heterotetramer of 2 PyrK and 2 PyrD type B subunits. The cofactor is [2Fe-2S] cluster. FAD is required as a cofactor.

It functions in the pathway pyrimidine metabolism; UMP biosynthesis via de novo pathway; orotate from (S)-dihydroorotate (NAD(+) route): step 1/1. Functionally, responsible for channeling the electrons from the oxidation of dihydroorotate from the FMN redox center in the PyrD type B subunit to the ultimate electron acceptor NAD(+). In Streptococcus mutans serotype c (strain ATCC 700610 / UA159), this protein is Dihydroorotate dehydrogenase B (NAD(+)), electron transfer subunit.